The chain runs to 159 residues: MTKSQKIELVSKLEEGFKASEAVVVCNYKGLNTKKLEELRNNAREMDVKVQIIKNTLASIALKNAGKDGMELKDTNIYLWGEDQLNVSKVADKFSEANQTFEIKTAFIDGEVASVDKVKALAKMPSRNELLAMLLQVWNAPITNFTIGLNALKEKKEAE.

It belongs to the universal ribosomal protein uL10 family. In terms of assembly, part of the ribosomal stalk of the 50S ribosomal subunit. The N-terminus interacts with L11 and the large rRNA to form the base of the stalk. The C-terminus forms an elongated spine to which L12 dimers bind in a sequential fashion forming a multimeric L10(L12)X complex.

Its function is as follows. Forms part of the ribosomal stalk, playing a central role in the interaction of the ribosome with GTP-bound translation factors. This chain is Large ribosomal subunit protein uL10, found in Campylobacter lari (strain RM2100 / D67 / ATCC BAA-1060).